The sequence spans 355 residues: Guanine nucleotide-binding protein G(z) subunit alpha (355 aa).

Residues 1-14 are compositionally biased toward basic and acidic residues; sequence MGCRQSSEEKEAAR. The disordered stretch occupies residues 1–26; it reads MGCRQSSEEKEAARRSRRIDRHLRSE. A lipid anchor (N-myristoyl glycine) is attached at Gly2. A lipid anchor (S-palmitoyl cysteine) is attached at Cys3. One can recognise a G-alpha domain in the interval 32 to 355; that stretch reads REIKLLLLGT…QNNLKYIGLC (324 aa). A G1 motif region spans residues 35-48; it reads KLLLLGTSNSGKST. Residues 40–47, 176–182, 201–205, 270–273, and Ala327 each bind GTP; these read GTSNSGKS, LRSRDMT, DVGGQ, and NKKD. Ser47 and Thr182 together coordinate Mg(2+). Residues 174-182 form a G2 motif region; the sequence is DILRSRDMT. The interval 197 to 206 is G3 motif; the sequence is FKMVDVGGQR. A G4 motif region spans residues 266–273; sequence ILFLNKKD. Residues 325 to 330 form a G5 motif region; the sequence is TCATDT.

Belongs to the G-alpha family. G(i/o/t/z) subfamily. In terms of assembly, G-proteins are composed of 3 units; alpha, beta and gamma. The alpha chain contains the guanine nucleotide binding site. Interacts with ADGRB2.

The protein localises to the membrane. Guanine nucleotide-binding proteins (G proteins) are involved as modulators or transducers in various transmembrane signaling systems. This is Guanine nucleotide-binding protein G(z) subunit alpha (Gnaz) from Mus musculus (Mouse).